The following is a 472-amino-acid chain: Levansucrase (472 aa).

The signal sequence occupies residues 1 to 29 (MNIKKIVKQATVLTFTTALLAGGATQAFA). Sucrose-binding residues include Trp85, Asp86, and Ser164. The Nucleophile role is filled by Asp86. A Ca(2+)-binding site is contributed by Asp241. Sucrose-binding residues include Arg246 and Asp247. Gln272, Leu308, Asn310, and Asp339 together coordinate Ca(2+). A sucrose-binding site is contributed by Glu340. Catalysis depends on Glu342, which acts as the Proton donor/acceptor. Arg360 contributes to the sucrose binding site.

It belongs to the glycosyl hydrolase 68 family.

Its subcellular location is the secreted. The catalysed reaction is [6)-beta-D-fructofuranosyl-(2-&gt;](n) alpha-D-glucopyranoside + sucrose = [6)-beta-D-fructofuranosyl-(2-&gt;](n+1) alpha-D-glucopyranoside + D-glucose. Ca(2+) may play an important structural role and promote stability of levansucrase. Catalyzes the synthesis of levan, a fructose polymer, by transferring the fructosyl moiety from sucrose to a growing acceptor molecule. Also displays sucrose hydrolase activity. This Bacillus amyloliquefaciens (Bacillus velezensis) protein is Levansucrase.